The chain runs to 313 residues: Serine/threonine-protein phosphatase PP2A-3 catalytic subunit (313 aa).

Residues Asp-61, His-63, Asp-89, and Asn-121 each contribute to the Mn(2+) site. His-122 functions as the Proton donor in the catalytic mechanism. Positions 171 and 245 each coordinate Mn(2+). Leu-313 carries the post-translational modification Leucine methyl ester.

It belongs to the PPP phosphatase family. PP-2A subfamily. As to quaternary structure, PP2A consists of a common heterodimeric core enzyme, composed of a 36 kDa catalytic subunit (subunit C) and a 65 kDa constant regulatory subunit (subunit A), that associates with a variety of regulatory subunits such as subunits B (the R2/B/PR55/B55, R3/B''/PR72/PR130/PR59 and R5/B'/B56 families). Interacts with ACR4. Interacts with TAP46. Interacts with SIC/RON3. Mn(2+) is required as a cofactor. In terms of processing, reversibly methyl esterified on Leu-313 by leucine carboxyl methyltransferase 1 (LCMT1) and pectin methylesterase 1 (PME1). Carboxyl methylation influences the affinity of the catalytic subunit for the different regulatory subunits, thereby modulating the PP2A holoenzyme's substrate specificity, enzyme activity and cellular localization. Phosphorylation of either threonine (by autophosphorylation-activated protein kinase) or tyrosine results in inactivation of the phosphatase. Auto-dephosphorylation has been suggested as a mechanism for reactivation.

The protein localises to the cytoplasm. It catalyses the reaction O-phospho-L-seryl-[protein] + H2O = L-seryl-[protein] + phosphate. The catalysed reaction is O-phospho-L-threonyl-[protein] + H2O = L-threonyl-[protein] + phosphate. Functions redundantly with PP2A4, and is involved in establishing auxin gradients, apical-basal axis of polarity and root and shoot apical meristem during embryogenesis. May dephosphorylate PIN1 and regulate its subcellular distribution for polar auxin transport. Involved in the regulation of formative cell division in roots by dephosphorylating ACR4 protein kinase. The protein is Serine/threonine-protein phosphatase PP2A-3 catalytic subunit of Arabidopsis thaliana (Mouse-ear cress).